The following is a 445-amino-acid chain: Anthranilate N-benzoyltransferase protein 1 (445 aa).

Residues histidine 164 and aspartate 392 each act as proton acceptor in the active site.

Belongs to the plant acyltransferase family. Post-translationally, N-terminus is blocked.

It catalyses the reaction anthranilate + benzoyl-CoA = N-benzoylanthranilate + CoA. It participates in phytoalexin biosynthesis; methoxydianthramide B biosynthesis. Its function is as follows. Catalyzes the formation of N-benzoylanthranilate, in the course of methoxydianthramide B, a phytoalexin. Phytoalexins are produced in response to infection by parasites, and are essential for the expression of disease resistance. This is Anthranilate N-benzoyltransferase protein 1 (HCBT1) from Dianthus caryophyllus (Carnation).